Here is a 459-residue protein sequence, read N- to C-terminus: Transcription factor AP-2-beta (459 aa).

A Glycyl lysine isopeptide (Lys-Gly) (interchain with G-Cter in SUMO) cross-link involves residue lysine 21. A disordered region spans residues 30–139 (HDGVPSHSSR…PQLSGLDPRR (110 aa)). Residues 35 to 51 (SHSSRLSQLGSVSQGPY) are compositionally biased toward polar residues. The segment covering 121–132 (LLPQPRAALPQL) has biased composition (low complexity). At serine 258 the chain carries Phosphoserine; by PKA. The H-S-H (helix-span-helix), dimerization stretch occupies residues 299 to 429 (RRKAANVTLL…YLTEALKGMD (131 aa)). The tract at residues 435–459 (NTTNRHTSGEGPGSKTGDKEEKHRK) is disordered. Residues 450-459 (TGDKEEKHRK) show a composition bias toward basic and acidic residues.

The protein belongs to the AP-2 family. Binds DNA as a dimer. Can form homodimers or heterodimers with other AP-2 family members. Interacts with CITED4. Interacts with UBE2I. Interacts with KCTD1; this interaction represses transcription activation. Interacts with CITED2 (via C-terminus); the interaction stimulates TFAP2B-transcriptional activity. Sumoylated. Sumoylated on Lys-21; which inhibits transcriptional activity. Localizes to neurons in areas of the cerebral cortex, cerebellum and hypothalamus (at protein level).

It localises to the nucleus. Its function is as follows. Sequence-specific DNA-binding protein that interacts with inducible viral and cellular enhancer elements to regulate transcription of selected genes. AP-2 factors bind to the consensus sequence 5'-GCCNNNGGC-3' and activate genes involved in a large spectrum of important biological functions including proper eye, face, body wall, limb and neural tube development. They also suppress a number of genes including MCAM/MUC18, C/EBP alpha and MYC. AP-2-beta appears to be required for normal face and limb development and for proper terminal differentiation and function of renal tubular epithelia. The polypeptide is Transcription factor AP-2-beta (Tfap2b) (Mus musculus (Mouse)).